We begin with the raw amino-acid sequence, 434 residues long: D-amino acid dehydrogenase (434 aa).

3–17 lines the FAD pocket; that stretch reads VIVLGSGVIGTTTAY.

The protein belongs to the DadA oxidoreductase family. It depends on FAD as a cofactor.

It catalyses the reaction a D-alpha-amino acid + A + H2O = a 2-oxocarboxylate + AH2 + NH4(+). Oxidative deamination of D-amino acids. This Bordetella parapertussis (strain 12822 / ATCC BAA-587 / NCTC 13253) protein is D-amino acid dehydrogenase.